The chain runs to 78 residues: DNA-directed RNA polymerase subunit omega (78 aa).

This sequence belongs to the RNA polymerase subunit omega family. In cyanobacteria the RNAP catalytic core is composed of 2 alpha, 1 beta, 1 beta', 1 gamma and 1 omega subunit. When a sigma factor is associated with the core the holoenzyme is formed, which can initiate transcription.

The enzyme catalyses RNA(n) + a ribonucleoside 5'-triphosphate = RNA(n+1) + diphosphate. In terms of biological role, promotes RNA polymerase assembly. Latches the N- and C-terminal regions of the beta' subunit thereby facilitating its interaction with the beta and alpha subunits. The sequence is that of DNA-directed RNA polymerase subunit omega from Prochlorococcus marinus subsp. pastoris (strain CCMP1986 / NIES-2087 / MED4).